Here is a 232-residue protein sequence, read N- to C-terminus: Orotate phosphoribosyltransferase (232 aa).

5-phospho-alpha-D-ribose 1-diphosphate-binding positions include Arg-107, Lys-108, Lys-111, His-113, and 133 to 141; that span reads EDLTTAGGS. Residue Thr-137 coordinates orotate.

This sequence belongs to the purine/pyrimidine phosphoribosyltransferase family. PyrE subfamily. In terms of assembly, homodimer. Mg(2+) is required as a cofactor.

The enzyme catalyses orotidine 5'-phosphate + diphosphate = orotate + 5-phospho-alpha-D-ribose 1-diphosphate. It participates in pyrimidine metabolism; UMP biosynthesis via de novo pathway; UMP from orotate: step 1/2. Its function is as follows. Catalyzes the transfer of a ribosyl phosphate group from 5-phosphoribose 1-diphosphate to orotate, leading to the formation of orotidine monophosphate (OMP). This chain is Orotate phosphoribosyltransferase, found in Sinorhizobium fredii (strain NBRC 101917 / NGR234).